Reading from the N-terminus, the 414-residue chain is Glucose-1-phosphate adenylyltransferase (414 aa).

Residues Y99, G164, 181–182, and S199 each bind alpha-D-glucose 1-phosphate; that span reads EK.

Belongs to the bacterial/plant glucose-1-phosphate adenylyltransferase family. As to quaternary structure, homotetramer.

The catalysed reaction is alpha-D-glucose 1-phosphate + ATP + H(+) = ADP-alpha-D-glucose + diphosphate. It functions in the pathway glycan biosynthesis; glycogen biosynthesis. In terms of biological role, involved in the biosynthesis of ADP-glucose, a building block required for the elongation reactions to produce glycogen. Catalyzes the reaction between ATP and alpha-D-glucose 1-phosphate (G1P) to produce pyrophosphate and ADP-Glc. This is Glucose-1-phosphate adenylyltransferase from Bifidobacterium adolescentis (strain ATCC 15703 / DSM 20083 / NCTC 11814 / E194a).